A 459-amino-acid chain; its full sequence is ATP-dependent protease ATPase subunit HslU (459 aa).

ATP is bound by residues Val-26, 68-73 (GVGKTE), Asp-271, Glu-337, and Arg-409.

This sequence belongs to the ClpX chaperone family. HslU subfamily. A double ring-shaped homohexamer of HslV is capped on each side by a ring-shaped HslU homohexamer. The assembly of the HslU/HslV complex is dependent on binding of ATP.

It localises to the cytoplasm. Its function is as follows. ATPase subunit of a proteasome-like degradation complex; this subunit has chaperone activity. The binding of ATP and its subsequent hydrolysis by HslU are essential for unfolding of protein substrates subsequently hydrolyzed by HslV. HslU recognizes the N-terminal part of its protein substrates and unfolds these before they are guided to HslV for hydrolysis. The protein is ATP-dependent protease ATPase subunit HslU of Xylella fastidiosa (strain M12).